The primary structure comprises 329 residues: Glycerol-3-phosphate dehydrogenase [NAD(P)+] (329 aa).

Positions 10, 11, 31, and 105 each coordinate NADPH. Sn-glycerol 3-phosphate-binding residues include Lys-105, Gly-134, and Ser-136. Residue Ala-138 coordinates NADPH. Lys-189, Asp-242, Ser-252, Arg-253, and Asn-254 together coordinate sn-glycerol 3-phosphate. Lys-189 serves as the catalytic Proton acceptor. Arg-253 is a binding site for NADPH. The NADPH site is built by Val-277 and Glu-279.

Belongs to the NAD-dependent glycerol-3-phosphate dehydrogenase family.

It is found in the cytoplasm. It carries out the reaction sn-glycerol 3-phosphate + NAD(+) = dihydroxyacetone phosphate + NADH + H(+). It catalyses the reaction sn-glycerol 3-phosphate + NADP(+) = dihydroxyacetone phosphate + NADPH + H(+). It functions in the pathway membrane lipid metabolism; glycerophospholipid metabolism. Its function is as follows. Catalyzes the reduction of the glycolytic intermediate dihydroxyacetone phosphate (DHAP) to sn-glycerol 3-phosphate (G3P), the key precursor for phospholipid synthesis. This chain is Glycerol-3-phosphate dehydrogenase [NAD(P)+], found in Neisseria meningitidis serogroup A / serotype 4A (strain DSM 15465 / Z2491).